A 756-amino-acid polypeptide reads, in one-letter code: Serine/threonine-protein kinase DCLK1 (756 aa).

Phosphoserine is present on residues serine 32 and serine 36. At threonine 46 the chain carries Phosphothreonine. Doublecortin domains lie at 57-143 (KKVR…LEYT) and 186-269 (KLVT…QDDF). Positions 288-393 (ASASRRGTTK…QRGWRREESE (106 aa)) are disordered. The segment covering 297–313 (KSPGPSRRSKSPASTSS) has biased composition (low complexity). Phosphoserine is present on residues serine 305, serine 307, serine 330, serine 332, serine 334, serine 337, serine 347, serine 352, serine 353, serine 355, serine 358, cysteine 362, and serine 364. Over residues 347–364 (SQHGGSSTSLSSTKVCSS) the composition is skewed to low complexity. Residues 366–375 (DENDGPGEGD) are compositionally biased toward acidic residues. Position 392 is a phosphoserine (serine 392). In terms of domain architecture, Protein kinase spans 406 to 663 (YKVGRTIGDG…AVQVLEHPWV (258 aa)). ATP contacts are provided by residues 412–420 (IGDGNFAVV) and lysine 435. Catalysis depends on aspartate 527, which acts as the Proton acceptor. Tyrosine 536 carries the post-translational modification Phosphotyrosine. A compositionally biased stretch (basic and acidic residues) spans 711–723 (QVFRRRRNQDVRS). The interval 711–756 (QVFRRRRNQDVRSRYKAQPAPPELNSESEDYSPSSSETVRSPNSPF) is disordered. Phosphoserine occurs at positions 742, 751, and 754.

This sequence belongs to the protein kinase superfamily. CAMK Ser/Thr protein kinase family. CaMK subfamily.

It carries out the reaction L-seryl-[protein] + ATP = O-phospho-L-seryl-[protein] + ADP + H(+). The enzyme catalyses L-threonyl-[protein] + ATP = O-phospho-L-threonyl-[protein] + ADP + H(+). Probable kinase that may be involved in a calcium-signaling pathway controlling neuronal migration in the developing brain. May also participate in functions of the mature nervous system. The sequence is that of Serine/threonine-protein kinase DCLK1 (Dclk1) from Mus musculus (Mouse).